The sequence spans 840 residues: Cancer-associated gene 1 protein homolog (840 aa).

The stretch at 303-559 (MALNEILKKL…HVARSEEQNY (257 aa)) forms a coiled coil. Residues 800-840 (EDLIRKPREKARKPRSKSLENHPKSMTMMPAVFKENRNDLD) form a disordered region. Residues 806–815 (PREKARKPRS) show a composition bias toward basic residues.

The chain is Cancer-associated gene 1 protein homolog (CAGE1) from Macaca fascicularis (Crab-eating macaque).